The chain runs to 116 residues: MKYSGYHLVIDLFGCNFDQLENTEYIIEMLKKLARALDTKIVAKAFHKFHPQGFSGALIISESHITIHTWPEDAYIGIDIFTCSKCFDSRKIVAYLKENLIFKKVEIKEILRGKID.

Ser63 acts as the Schiff-base intermediate with substrate; via pyruvic acid in catalysis. At Ser63 the chain carries Pyruvic acid (Ser); by autocatalysis. The Proton acceptor; for processing activity role is filled by His68. Cys83 acts as the Proton donor; for catalytic activity in catalysis.

It belongs to the prokaryotic AdoMetDC family. Type 1 subfamily. Heterotetramer of two alpha and two beta chains arranged as a dimer of alpha/beta heterodimers. Pyruvate serves as cofactor. Post-translationally, is synthesized initially as an inactive proenzyme. Formation of the active enzyme involves a self-maturation process in which the active site pyruvoyl group is generated from an internal serine residue via an autocatalytic post-translational modification. Two non-identical subunits are generated from the proenzyme in this reaction, and the pyruvate is formed at the N-terminus of the alpha chain, which is derived from the carboxyl end of the proenzyme. The post-translation cleavage follows an unusual pathway, termed non-hydrolytic serinolysis, in which the side chain hydroxyl group of the serine supplies its oxygen atom to form the C-terminus of the beta chain, while the remainder of the serine residue undergoes an oxidative deamination to produce ammonia and the pyruvoyl group blocking the N-terminus of the alpha chain.

The enzyme catalyses S-adenosyl-L-methionine + H(+) = S-adenosyl 3-(methylsulfanyl)propylamine + CO2. The protein operates within amine and polyamine biosynthesis; S-adenosylmethioninamine biosynthesis; S-adenosylmethioninamine from S-adenosyl-L-methionine: step 1/1. In terms of biological role, catalyzes the decarboxylation of S-adenosylmethionine to S-adenosylmethioninamine (dcAdoMet), the propylamine donor required for the synthesis of the polyamines spermine and spermidine from the diamine putrescine. The chain is S-adenosylmethionine decarboxylase proenzyme from Clostridium botulinum (strain Okra / Type B1).